The primary structure comprises 422 residues: Serine--tRNA ligase (422 aa).

Thr229 to Glu231 lines the L-serine pocket. ATP-binding positions include Arg260–Glu262 and Val276. L-serine is bound at residue Glu283. Glu349–Ser352 contacts ATP. Thr384 contacts L-serine.

The protein belongs to the class-II aminoacyl-tRNA synthetase family. Type-1 seryl-tRNA synthetase subfamily. In terms of assembly, homodimer. The tRNA molecule binds across the dimer.

It localises to the cytoplasm. The catalysed reaction is tRNA(Ser) + L-serine + ATP = L-seryl-tRNA(Ser) + AMP + diphosphate + H(+). It carries out the reaction tRNA(Sec) + L-serine + ATP = L-seryl-tRNA(Sec) + AMP + diphosphate + H(+). Its pathway is aminoacyl-tRNA biosynthesis; selenocysteinyl-tRNA(Sec) biosynthesis; L-seryl-tRNA(Sec) from L-serine and tRNA(Sec): step 1/1. Functionally, catalyzes the attachment of serine to tRNA(Ser). Is also able to aminoacylate tRNA(Sec) with serine, to form the misacylated tRNA L-seryl-tRNA(Sec), which will be further converted into selenocysteinyl-tRNA(Sec). This is Serine--tRNA ligase from Treponema denticola (strain ATCC 35405 / DSM 14222 / CIP 103919 / JCM 8153 / KCTC 15104).